Consider the following 210-residue polypeptide: Thymidylate kinase (210 aa).

10 to 17 (GPDGAGKT) contributes to the ATP binding site.

The protein belongs to the thymidylate kinase family.

The enzyme catalyses dTMP + ATP = dTDP + ADP. Its function is as follows. Phosphorylation of dTMP to form dTDP in both de novo and salvage pathways of dTTP synthesis. This Geobacillus sp. (strain WCH70) protein is Thymidylate kinase.